Reading from the N-terminus, the 190-residue chain is Cypemycin cysteine dehydrogenase (decarboxylating) (190 aa).

The protein belongs to the HFCD (homooligomeric flavin containing Cys decarboxylase) superfamily.

The enzyme catalyses [cypemycin](1-18)-L-Cys-L-Leu-L-Val-L-Cys + A = C(3,19),S(21)-[cypemycin](1-18)-L-Ala-L-Leu-N-thioethenyl-L-valinamide + hydrogen sulfide + AH2 + CO2. Its function is as follows. Involved in the biosynthesis of the lanaridin cypemycin. The sequence is that of Cypemycin cysteine dehydrogenase (decarboxylating) from Streptomyces sp.